We begin with the raw amino-acid sequence, 492 residues long: MPESMSFSLNQLNLQLLIPMCISLFGGIILLGVGVFNKTKSRDLYITISMLFVVLNLGFLFLEGNPIRQFGFFNLLLVDGISLLTQIIMLLATFVLLLFFMNQNNLPETQGAEFYALLLFSIAGFAFMASSQNLILILLGLETASLCLYALIALHNQKSAFEASIKYFIMGALATTFYAFGAMLLYAATGSVDIISIATFLHQQSYQPSILVFAGFVFLLCALGFKVTLVPFHSWGPDVYEGSNALLAAFIAIVPKIVTFAVIIRIFSVFIDSHSAFVEYTLYVIVVLTMTIPNLIALTQKDVKRMLAYSSISHSGFVLAAVLINTPQSHSVIFFYWFLFLFANIGAFGILWLSVDCKKNYQTQISHPFEKFSGMIKTNPTLAILLTLFMFALAGIPPFCVFWGKMYLMQSAISANYTILALIMAINSIIAGFYYLKLVIYIFAKEPYEIKDSQSSLELSSKFALSITAFVSVACLFMVQNLLEIIEKYILK.

Helical transmembrane passes span 16–36 (LLIP…VGVF), 44–64 (LYIT…FLEG), 81–101 (ISLL…LFFM), 111–131 (GAEF…MASS), 134–154 (LILI…LIAL), 168–188 (FIMG…LYAA), 210–230 (ILVF…VTLV), 244–264 (NALL…AVII), 276–296 (AFVE…PNLI), 306–326 (MLAY…LINT), 332–352 (VIFF…GILW), 382–402 (LAIL…FCVF), 423–443 (IMAI…IYIF), and 463–483 (FALS…QNLL).

Belongs to the complex I subunit 2 family. As to quaternary structure, NDH-1 is composed of 14 different subunits. Subunits NuoA, H, J, K, L, M, N constitute the membrane sector of the complex.

The protein resides in the cell inner membrane. The enzyme catalyses a quinone + NADH + 5 H(+)(in) = a quinol + NAD(+) + 4 H(+)(out). In terms of biological role, NDH-1 shuttles electrons from NADH, via FMN and iron-sulfur (Fe-S) centers, to quinones in the respiratory chain. The immediate electron acceptor for the enzyme in this species is believed to be ubiquinone. Couples the redox reaction to proton translocation (for every two electrons transferred, four hydrogen ions are translocated across the cytoplasmic membrane), and thus conserves the redox energy in a proton gradient. The protein is NADH-quinone oxidoreductase subunit N of Helicobacter hepaticus (strain ATCC 51449 / 3B1).